The primary structure comprises 314 residues: Olfactory receptor 1 (314 aa).

At 1 to 29 (MTERNQTVISQFLLLGLPIPPEHQHVFYA) the chain is on the extracellular side. N-linked (GlcNAc...) asparagine glycosylation is present at Asn5. The helical transmembrane segment at 30-50 (LFLSMYLTTVLGNLIIIILIL) threads the bilayer. Residues 51 to 59 (LDSHLHTPM) lie on the Cytoplasmic side of the membrane. Residues 60-81 (YLFLSNLSFSDLCFSSVTMPKL) traverse the membrane as a helical segment. Residues 82 to 97 (LQNMQSQVPSIPYAGC) are Extracellular-facing. Cys97 and Cys179 form a disulfide bridge. The helical transmembrane segment at 98–118 (LSQIYFFLFFGDLGNFLLVAM) threads the bilayer. Residues 119-143 (AYDRYVAICFPLHYMSIMSPKLCVS) are Cytoplasmic-facing. A helical transmembrane segment spans residues 144 to 164 (LVVLSWVLTTFHAMLHTLLMA). Topologically, residues 165-196 (RLSFCEDNVIPHFFCDMSALLKLACSDTRVNE) are extracellular. Residues 197 to 217 (VVIFIVVSLFLVLPFALIIMS) traverse the membrane as a helical segment. The Cytoplasmic portion of the chain corresponds to 218–240 (YVRIVSSILKVPSSQGIYKAFST). Residues 241 to 261 (CGSHLSVVSLFYGTVIGLYLC) form a helical membrane-spanning segment. Over 262 to 271 (PSSNNSTVKE) the chain is Extracellular. Residues Asn265 and Asn266 are each glycosylated (N-linked (GlcNAc...) asparagine). The helical transmembrane segment at 272 to 292 (TVMSLMYTVVTPMLNPFIYSL) threads the bilayer. Residues 293 to 314 (RNRDIKGAMERIFCKRKIQLNL) lie on the Cytoplasmic side of the membrane.

Belongs to the G-protein coupled receptor 1 family. In terms of tissue distribution, olfactory epithelium.

Its subcellular location is the cell membrane. Functionally, odorant receptor. Activated by a lily-derived aldehyde as well as other odorants. May signal through an inositol 1,4,5-trisphosphate (IP3) second messenger system. This Rattus norvegicus (Rat) protein is Olfactory receptor 1.